The primary structure comprises 304 residues: Bifunctional protein FolD (304 aa).

Residues 170 to 172 (GRS), Ser-195, and Ile-236 contribute to the NADP(+) site.

Belongs to the tetrahydrofolate dehydrogenase/cyclohydrolase family. In terms of assembly, homodimer.

It catalyses the reaction (6R)-5,10-methylene-5,6,7,8-tetrahydrofolate + NADP(+) = (6R)-5,10-methenyltetrahydrofolate + NADPH. The enzyme catalyses (6R)-5,10-methenyltetrahydrofolate + H2O = (6R)-10-formyltetrahydrofolate + H(+). The protein operates within one-carbon metabolism; tetrahydrofolate interconversion. In terms of biological role, catalyzes the oxidation of 5,10-methylenetetrahydrofolate to 5,10-methenyltetrahydrofolate and then the hydrolysis of 5,10-methenyltetrahydrofolate to 10-formyltetrahydrofolate. In Anaplasma phagocytophilum (strain HZ), this protein is Bifunctional protein FolD.